Here is a 314-residue protein sequence, read N- to C-terminus: DNA-directed RNA polymerase subunit alpha (314 aa).

Residues 1–228 (MIEIEKPKIE…EHLNIFVGLT (228 aa)) form an alpha N-terminal domain (alpha-NTD) region. Positions 245-314 (KEKVMEMTIE…DLGLGLRDDD (70 aa)) are alpha C-terminal domain (alpha-CTD).

This sequence belongs to the RNA polymerase alpha chain family. As to quaternary structure, homodimer. The RNAP catalytic core consists of 2 alpha, 1 beta, 1 beta' and 1 omega subunit. When a sigma factor is associated with the core the holoenzyme is formed, which can initiate transcription.

The catalysed reaction is RNA(n) + a ribonucleoside 5'-triphosphate = RNA(n+1) + diphosphate. Its function is as follows. DNA-dependent RNA polymerase catalyzes the transcription of DNA into RNA using the four ribonucleoside triphosphates as substrates. This is DNA-directed RNA polymerase subunit alpha from Oceanobacillus iheyensis (strain DSM 14371 / CIP 107618 / JCM 11309 / KCTC 3954 / HTE831).